We begin with the raw amino-acid sequence, 130 residues long: Small ribosomal subunit protein uS8 (130 aa).

Belongs to the universal ribosomal protein uS8 family. Part of the 30S ribosomal subunit. Contacts proteins S5 and S12.

One of the primary rRNA binding proteins, it binds directly to 16S rRNA central domain where it helps coordinate assembly of the platform of the 30S subunit. This is Small ribosomal subunit protein uS8 from Pseudoalteromonas translucida (strain TAC 125).